Here is a 455-residue protein sequence, read N- to C-terminus: ATP-dependent protease ATPase subunit HslU (455 aa).

ATP-binding positions include Val-23, 65–70, Asp-266, Glu-333, and Arg-405; that span reads GVGKTE.

The protein belongs to the ClpX chaperone family. HslU subfamily. As to quaternary structure, a double ring-shaped homohexamer of HslV is capped on each side by a ring-shaped HslU homohexamer. The assembly of the HslU/HslV complex is dependent on binding of ATP.

The protein localises to the cytoplasm. Its function is as follows. ATPase subunit of a proteasome-like degradation complex; this subunit has chaperone activity. The binding of ATP and its subsequent hydrolysis by HslU are essential for unfolding of protein substrates subsequently hydrolyzed by HslV. HslU recognizes the N-terminal part of its protein substrates and unfolds these before they are guided to HslV for hydrolysis. The sequence is that of ATP-dependent protease ATPase subunit HslU from Xanthomonas oryzae pv. oryzae (strain MAFF 311018).